A 151-amino-acid polypeptide reads, in one-letter code: Transcriptional regulator MraZ (151 aa).

2 SpoVT-AbrB domains span residues 5–51 (AHEL…PVAE) and 81–124 (AEIL…GREQ).

The protein belongs to the MraZ family. In terms of assembly, forms oligomers.

The protein localises to the cytoplasm. It localises to the nucleoid. The polypeptide is Transcriptional regulator MraZ (Neisseria gonorrhoeae (strain ATCC 700825 / FA 1090)).